The following is a 3301-amino-acid chain: MARRPLWWGLPGPSTPVLLLLLLSLFPFSREELGGGGDQDWDPGVATTTGPRAQIGSGAVALCPESPGVWEDGDPGLGVREPVFMRLRVGRQNARNGRGAPEQPNAEVVVQALGSREQEAGQGPGYLLCWHPEISSCGRTGPLRRGSLPLDALSPGDSDLRNSSPHPSELLAQPDGSRPVAFQRNARRSIRKRVETSRCCGKLWEPGHKGQGERSATSTVDRGPFRRDCLPGSLGSGLGEDSAPRAVRTAPTPGSAPRESRTAPGRMRSRGLFRRRFLFERPGPRPPGFPTGPEAKQILSTNQARPRRAANRHPQFPQYNYQTLVPENEAAGTSVLRVVAQDPDPGEAGRLIYSLAALMNSRSLELFSIDPQSGLIRTAAALDRESMERHYLRVTAQDHGSPRLSATTMVAVTVADRNDHAPVFEQAQYRETLRENVEEGYPILQLRATDGDAPPNANLRYRFVGSPAVRTAAAAAFEIDPRSGLISTSGRVDREHMESYELVVEASDQGQEPGPRSATVRVHITVLDENDNAPQFSEKRYVAQVREDVRPHTVVLRVTATDKDKDANGLVHYNIISGNSRGHFAIDSLTGEIQVMAPLDFEAEREYALRIRAQDAGRPPLSNNTGLASIQVVDINDHAPIFVSTPFQVSVLENAPLGHSVIHIQAVDADHGENSRLEYSLTGVASDTPFVINSATGWVSVSGPLDRESVEHYFFGVEARDHGSPPLSASASVTVTVLDVNDNRPEFTMKEYHLRLNEDAAVGTSVVSVTAVDRDANSAISYQITGGNTRNRFAISTQGGVGLVTLALPLDYKQERYFKLVLTASDRALHDHCYVHINITDANTHRPVFQSAHYSVSMNEDRPVGSTVVVISASDDDVGENARITYLLEDNLPQFRIDADSGAITLQAPLDYEDQVTYTLAITARDNGIPQKADTTYVEVMVNDVNDNAPQFVASHYTGLVSEDAPPFTSVLQISATDRDAHANGRVQYTFQNGEDGDGDFTIEPTSGIVRTVRRLDREAVPVYELTAYAVDRGVPPLRTPVSIQVTVQDVNDNAPVFPAEEFEVRVKENSIVGSVVAQITAVDPDDGPNAHIMYQIVEGNIPELFQMDIFSGELTALIDLDYEARQEYVIVVQATSAPLVSRATVHVRLVDQNDNSPVLNNFQILFNNYVSNRSDTFPSGIIGRIPAYDPDVSDHLFYSFERGNELQLLVVNRTSGELRLSRKLDNNRPLVASMLVTVTDGLHSVTAQCVLRVVIITEELLANSLTVRLENMWQERFLSPLLGHFLEGVAAVLATPTEDVFIFNIQNDTDVGGTVLNVSFSALAPRGAGAGAAGPWFSSEELQEQLYVRRAALAARSLLDVLPFDDNVCLREPCENYMKCVSVLRFDSSAPFLASTSTLFRPIQPIAGLRCRCPPGFTGDFCETELDLCYSNPCRNGGACARREGGYTCVCRPRFTDCELDTEAGRCVPGVCRNGGTCTNAPNGGFRCQCPAGGAFEGPRCEVAARSFPPSSFVMFRGLRQRFHLTLSLSFATVQPSGLLFYNGRLNEKHDFLALELVAGQVRLTYSTGESNTVVSPTVPGGLSDGQWHTVHLRYYNKPRTDALGGAQGPSKDKVAVLSVDDCNVAVALQFGAEIGNYSCAAAGVQTSSKKSLDLTGPLLLGGVPNLPENFPVSHKDFIGCMRDLHIDGRRMDMAAFVANNGTMAGCQAKSHFCASGPCKNNGFCSERWGGFSCDCPVGFGGKDCRLTMAHPYHFQGNGTLSWDFGNDMAVSVPWYLGLSFRTRATKGILMQVQLGPHSVLLCKLDRGLLSVTLNRASGHTVHLLLDQMTVSDGRWHDLRLELQEEPGGRRGHHIFMVSLDFTLFQDTMAMGGELQGLKVKQLHVGGLPPSSKEEGHQGLVGCIQGVWIGFTPFGSSALLPPSHRVNVEPGCTVTNPCASGPCPPHADCKDLWQTFSCTCRPGYYGPGCVDACLLNPCQNQGSCRHLQGAPHGYTCDCVSGYFGQHCEHRVDQQCPRGWWGSPTCGPCNCDVHKGFDPNCNKTNGQCHCKEFHYRPRGSDSCLPCDCYPVGSTSRSCAPHSGQCPCRPGALGRQCNSCDSPFAEVTASGCRVLYDACPKSLRSGVWWPQTKFGVLATVPCPRGALGAAVRLCDEDQGWLEPDLFNCTSPAFRELSLLLDGLELNKTALDTVEAKKLAQRLREVTGQTDHYFSQDVRVTARLLAYLLAFESHQQGFGLTATQDAHFNENLLWAGSALLAPETGHLWAALGQRAPGGSPGSAGLVQHLEEYAATLARNMELTYLNPVGLVTPNIMLSIDRMEHPSSTQGARRYPRYHSNLFRGQDAWDPHTHVLLPSQASQPSPSEVLPTSSNAENATASSVVSPPAPLEPESEPGISIVILLVYRALGGLLPAQFQAERRGARLPQNPVMNSPVVSVAVFHGRNFLRGVLVSPINLEFRLLQTANRSKAICVQWDPPGPTDQHGMWTARDCELVHRNGSHARCRCSRTGTFGVLMDASPRERLEGDLELLAVFTHVVVAVSVTALVLTAAVLLSLRSLKSNVRGIHANVAAALGVAELLFLLGIHRTHNQLLCTAVAILLHYFFLSTFAWLLVQGLHLYRMQVEPRNVDRGAMRFYHALGWGVPAVLLGLAVGLDPEGYGNPDFCWISIHEPLIWSFAGPIVLVIVMNGTMFLLAARTSCSTGQREAKKTSVLTLRSSFLLLLLVSASWLFGLLAVNHSILAFHYLHAGLCGLQGLAVLLLFCVLNADARAAWTPACLGKKAAPEETRPAPGPGSGAYNNTALFEESGLIRITLGASTVSSVSSARSGRAQDQDSQRGRSYLRDNVLVRHGSTAEHTERSLQAHAGPTDLDVAMFHRDAGADSDSDSDLSLEEERSLSIPSSESEDNGRTRGRFQRPLRRAAQSERLLAHPKDVDGNDLLSYWPALGECEAAPCALQAWGSERRLGLDSNKDAANNNQPELALTSGDETSLGRAQRQRKGILKNRLQYPLVPQSRGTPELSWCRAATLGHRAVPAASYGRIYAGGGTGSLSQPASRYSSREQLDLLLRRQLSKERLEEVPVPAPVLHPLSRPGSQERLDTAPARLEARDRGSTLPRRQPPRDYPGTMAGRFGSRDALDLGAPREWLSTLPPPRRNRDLDPQHPPLPLSPQRQLSRDPLLPSRPLDSLSRISNSREGLDQVPSRHPSREALGPAPQLLRAREDPASGPSHGPSTEQLDILSSILASFNSSALSSVQSSSTPSGPHTTATASALGPSTPRSATSHSISELSPDSEVPRSEGHS.

A signal peptide spans 1–31; sequence MARRPLWWGLPGPSTPVLLLLLLSLFPFSRE. Over 32–2531 the chain is Extracellular; the sequence is ELGGGGDQDW…RLEGDLELLA (2500 aa). Disordered stretches follow at residues 148 to 189 and 202 to 314; these read LPLD…ARRS and KLWE…NRHP. The segment covering 267–276 has biased composition (basic residues); that stretch reads MRSRGLFRRR. 9 consecutive Cadherin domains span residues 317–424, 425–536, 537–642, 643–747, 748–849, 850–952, 953–1058, 1059–1160, and 1161–1257; these read PQYN…APVF, EQAQ…APQF, SEKR…APIF, VSTP…RPEF, TMKE…RPVF, QSAH…APQF, VASH…APVF, PAEE…SPVL, and NNFQ…VVII. N-linked (GlcNAc...) asparagine glycosylation is present at Asn-623. N-linked (GlcNAc...) asparagine glycosylation is present at Asn-838. N-linked (GlcNAc...) asparagine glycans are attached at residues Asn-1173, Asn-1213, Asn-1308, and Asn-1318. Positions 1366-1424 constitute an EGF-like 1; calcium-binding domain; sequence DDNVCLREPCENYMKCVSVLRFDSSAPFLASTSTLFRPIQPIAGLRCRCPPGFTGDFCE. 9 cysteine pairs are disulfide-bonded: Cys-1370–Cys-1381, Cys-1375–Cys-1412, Cys-1414–Cys-1423, Cys-1430–Cys-1441, Cys-1435–Cys-1450, Cys-1452–Cys-1459, Cys-1468–Cys-1479, Cys-1473–Cys-1489, and Cys-1491–Cys-1502. Residues 1426 to 1460 form the EGF-like 2; calcium-binding domain; it reads ELDLCYSNPCRNGGACARREGGYTCVCRPRFTDCE. Residues 1464–1503 enclose the EGF-like 3; calcium-binding domain; sequence EAGRCVPGVCRNGGTCTNAPNGGFRCQCPAGGAFEGPRCE. The region spanning 1504 to 1708 is the Laminin G-like 1 domain; the sequence is VAARSFPPSS…VANNGTMAGC (205 aa). 2 N-linked (GlcNAc...) asparagine glycosylation sites follow: Asn-1638 and Asn-1702. 4 cysteine pairs are disulfide-bonded: Cys-1682–Cys-1708, Cys-1715–Cys-1726, Cys-1720–Cys-1735, and Cys-1737–Cys-1746. In terms of domain architecture, EGF-like 4; calcium-binding spans 1711 to 1747; that stretch reads KSHFCASGPCKNNGFCSERWGGFSCDCPVGFGGKDCR. The 183-residue stretch at 1751–1933 folds into the Laminin G-like 2 domain; that stretch reads AHPYHFQGNG…SHRVNVEPGC (183 aa). N-linked (GlcNAc...) asparagine glycosylation occurs at Asn-1759. Intrachain disulfides connect Cys-1904–Cys-1933, Cys-1939–Cys-1950, Cys-1944–Cys-1959, Cys-1961–Cys-1970, Cys-1974–Cys-1985, Cys-1979–Cys-1997, Cys-1999–Cys-2008, Cys-2016–Cys-2029, and Cys-2031–Cys-2041. The EGF-like 5; calcium-binding domain occupies 1935–1971; the sequence is VTNPCASGPCPPHADCKDLWQTFSCTCRPGYYGPGCV. The residue at position 1952 (Asp-1952) is a (3R)-3-hydroxyaspartate. Positions 1972–2002 constitute an EGF-like 6; calcium-binding domain; that stretch reads DACLLNPCQNQGSCRHLQGAPHGYTCDCVSG. The EGF-like 7; calcium-binding domain maps to 2003–2042; it reads YFGQHCEHRVDQQCPRGWWGSPTCGPCNCDVHKGFDPNCN. Asn-2042 is a glycosylation site (N-linked (GlcNAc...) asparagine). One can recognise an EGF-like 8; calcium-binding domain in the interval 2044–2079; the sequence is TNGQCHCKEFHYRPRGSDSCLPCDCYPVGSTSRSCA. Intrachain disulfides connect Cys-2048–Cys-2063, Cys-2050–Cys-2066, Cys-2068–Cys-2078, Cys-2087–Cys-2096, and Cys-2099–Cys-2111. The region spanning 2066–2113 is the Laminin EGF-like domain; sequence CDCYPVGSTSRSCAPHSGQCPCRPGALGRQCNSCDSPFAEVTASGCRV. Phosphotyrosine is present on Tyr-2115. N-linked (GlcNAc...) asparagine glycans are attached at residues Asn-2166, Asn-2185, Asn-2375, Asn-2465, and Asn-2497. The segment at 2353 to 2388 is disordered; it reads LLPSQASQPSPSEVLPTSSNAENATASSVVSPPAPL. Residues 2355-2383 show a composition bias toward low complexity; sequence PSQASQPSPSEVLPTSSNAENATASSVVS. Residues 2357–2521 enclose the GAIN-B domain; sequence QASQPSPSEV…GVLMDASPRE (165 aa). 2 disulfide bridges follow: Cys-2471-Cys-2503 and Cys-2491-Cys-2505. Residues 2471-2521 are GPS; sequence CVQWDPPGPTDQHGMWTARDCELVHRNGSHARCRCSRTGTFGVLMDASPRE. Residues 2532-2552 form a helical membrane-spanning segment; the sequence is VFTHVVVAVSVTALVLTAAVL. Over 2553-2563 the chain is Cytoplasmic; the sequence is LSLRSLKSNVR. A helical transmembrane segment spans residues 2564 to 2584; the sequence is GIHANVAAALGVAELLFLLGI. Topologically, residues 2585–2592 are extracellular; that stretch reads HRTHNQLL. A helical transmembrane segment spans residues 2593-2613; the sequence is CTAVAILLHYFFLSTFAWLLV. Residues 2614–2634 are Cytoplasmic-facing; sequence QGLHLYRMQVEPRNVDRGAMR. A helical transmembrane segment spans residues 2635 to 2655; sequence FYHALGWGVPAVLLGLAVGLD. The Extracellular segment spans residues 2656 to 2673; the sequence is PEGYGNPDFCWISIHEPL. A helical membrane pass occupies residues 2674–2694; sequence IWSFAGPIVLVIVMNGTMFLL. Residues 2695 to 2716 lie on the Cytoplasmic side of the membrane; sequence AARTSCSTGQREAKKTSVLTLR. The chain crosses the membrane as a helical span at residues 2717–2737; the sequence is SSFLLLLLVSASWLFGLLAVN. Residues 2738–2744 are Extracellular-facing; that stretch reads HSILAFH. The helical transmembrane segment at 2745-2765 threads the bilayer; the sequence is YLHAGLCGLQGLAVLLLFCVL. Residues 2766–3301 lie on the Cytoplasmic side of the membrane; the sequence is NADARAAWTP…SEVPRSEGHS (536 aa). Disordered stretches follow at residues 2823-2844, 2879-2919, and 2969-2992; these read SSAR…YLRD, AGAD…RPLR, and SNKD…TSLG. Over residues 2881 to 2891 the composition is skewed to acidic residues; that stretch reads ADSDSDSDLSL. Residues 2910–2919 show a composition bias toward basic residues; sequence TRGRFQRPLR. At Tyr-3042 the chain carries Phosphotyrosine. Positions 3083–3301 are disordered; it reads APVLHPLSRP…SEVPRSEGHS (219 aa). Ser-3090 is modified (phosphoserine). Over residues 3094 to 3111 the composition is skewed to basic and acidic residues; that stretch reads SQERLDTAPARLEARDRG. 2 stretches are compositionally biased toward low complexity: residues 3168 to 3189 and 3239 to 3261; these read SPQR…SLSR and LSSI…STPS. Residues 3276 to 3289 show a composition bias toward polar residues; sequence TPRSATSHSISELS.

Belongs to the G-protein coupled receptor 2 family. LN-TM7 subfamily. Expressed in the CNS and in the eye.

The protein resides in the cell membrane. Functionally, receptor that may have an important role in cell/cell signaling during nervous system formation. The chain is Cadherin EGF LAG seven-pass G-type receptor 3 (Celsr3) from Mus musculus (Mouse).